A 76-amino-acid chain; its full sequence is Esculentin-2CG1 (76 aa).

Positions 1 to 22 (MFTMKKSMLLLFFLGTISLSLC) are cleaved as a signal peptide. A propeptide spans 23-37 (EEERSADEDDGEEEV) (removed in mature form). Cys-70 and Cys-76 are oxidised to a cystine.

In terms of tissue distribution, expressed by the skin glands.

The protein resides in the secreted. Its function is as follows. Antimicrobial peptide active against a variety of Gram-positive and some Gram-negative bacterial strains. Has antifungal activity against a slime mold isolate. Has hemolytic activity against human erythrocytes. The protein is Esculentin-2CG1 of Amolops chunganensis (Chungan torrent frog).